The chain runs to 111 residues: PHD finger-like domain-containing protein 5A (111 aa).

The protein belongs to the PHF5 family.

This chain is PHD finger-like domain-containing protein 5A, found in Drosophila melanogaster (Fruit fly).